Consider the following 487-residue polypeptide: MELNASLTLILPEIVMAISAMALILITAYVGDKTARLVSILAAATLGAAAVMVAPALTSGASGPDTVAFGGQFLADSFASFAKILIYLSAIGCLMIAPAFFDRLKAMRPEYPVLVLLATLGMSIMVSAGDLITLYIGLELNSLAAYVLASFLRNDTRSAEAGLKYFVLGALASGILLYGMSLVYGFTGTTDFEGVRGALTGDMSTGALFGVIFVLAGLAFKIAAVPFHMWTPDVYEGAPTPVTTFFATAPKVAAVALTARVALSPFGEQTEAWQQIVIFAALASIVLGALGAIGQTNLKRLLAYSSINNVGFILIGLAASTVAGLSAMLTYLAIYVVMALGSFVALLMLKDEDGTPLETFDDIAGLSTTRPALAWCLLFLMFSLAGIPPLLGFWGKFVVFQAAVQADMVLLAALGIAASVIGAFYYIKFVKVMFFDDAVDRVKGTSDTAHWVLLILAAVVVSPLGYLLTGWLGGLTDSAASALFIAS.

13 consecutive transmembrane segments (helical) span residues 7 to 27 (LTLI…ILIT), 37 to 57 (LVSI…APAL), 81 to 101 (FAKI…PAFF), 112 to 132 (PVLV…GDLI), 166 to 186 (FVLG…VYGF), 207 to 227 (ALFG…AVPF), 237 to 257 (GAPT…AVAL), 276 to 296 (IVIF…IGQT), 307 to 327 (INNV…GLSA), 329 to 349 (LTYL…LLML), 373 to 393 (LAWC…LLGF), 407 to 427 (DMVL…FYYI), and 452 to 472 (VLLI…TGWL).

It belongs to the complex I subunit 2 family. NDH-1 is composed of 14 different subunits. Subunits NuoA, H, J, K, L, M, N constitute the membrane sector of the complex.

The protein localises to the cell inner membrane. It carries out the reaction a quinone + NADH + 5 H(+)(in) = a quinol + NAD(+) + 4 H(+)(out). Functionally, NDH-1 shuttles electrons from NADH, via FMN and iron-sulfur (Fe-S) centers, to quinones in the respiratory chain. The immediate electron acceptor for the enzyme in this species is believed to be ubiquinone. Couples the redox reaction to proton translocation (for every two electrons transferred, four hydrogen ions are translocated across the cytoplasmic membrane), and thus conserves the redox energy in a proton gradient. This Erythrobacter litoralis (strain HTCC2594) protein is NADH-quinone oxidoreductase subunit N.